The primary structure comprises 370 residues: Protein DVU_0535 (370 aa).

Topologically, residues Met1 to Glu258 are cytoplasmic. 4Fe-4S ferredoxin-type domains follow at residues Tyr40–Ala70, Asp101–Asp132, and Gly133–Ala162. [4Fe-4S] cluster is bound by residues Cys49, Cys52, Cys55, Cys59, Cys110, Cys113, Cys118, Cys122, Cys142, Cys145, Cys148, Cys152, Cys172, Cys175, Cys187, and Cys191. A helical transmembrane segment spans residues Tyr259–Ile284. Residues Thr285–Ala370 lie on the Periplasmic side of the membrane. Basic and acidic residues predominate over residues Phe345 to Pro355. The tract at residues Phe345–Ala370 is disordered.

The protein resides in the cell membrane. HMWC (high-molecular-weight cytochrome c precursor), ORF2, ORF3, ORF4, ORF5, ORF6 in the HMC operon form a transmembrane protein complex that allows electron flow from the periplasmic hydrogenase to the cytoplasmic enzymes that catalyze reduction of sulfates. ORF2 is a transmembrane redox protein. The polypeptide is Protein DVU_0535 (Nitratidesulfovibrio vulgaris (strain ATCC 29579 / DSM 644 / CCUG 34227 / NCIMB 8303 / VKM B-1760 / Hildenborough) (Desulfovibrio vulgaris)).